The primary structure comprises 231 residues: Response regulator Rre1 (231 aa).

One can recognise a Response regulatory domain in the interval 6 to 123 (SLLLVDDEPG…ELEAIVRNLL (118 aa)). Residue aspartate 56 is modified to 4-aspartylphosphate. Residues 163–228 (PSPIKLDFTP…ELVRFALQHG (66 aa)) enclose the HTH luxR-type domain. The H-T-H motif DNA-binding region spans 187–206 (NKEIAAQLKTSVRNVEKYVS).

As to quaternary structure, interacts with histidine kinase Hik2; may accept phosphate from Hik2.

Its function is as follows. Member of at least 2 two-component regulatory systems Hik2/Rre1 and Hik34/Rre1. Responds to hyperosmotic stress, regulates expression of at least 24 genes including dnaK2 and hspA with Hik34 and sigB (sll0306), sll0528, slr1119, slr0852 and ssr3188 with Hik2. Responds to salt stress, regulates expression of at least 24 genes including adhA, dnaK2 and hspA with Hik34. Binds the adhA promoter. Phosphorylated by Hik2 in vitro. Phosphorylated protein has 10-fold higher affinity for DNA than unphosphorylated protein. In Synechocystis sp. (strain ATCC 27184 / PCC 6803 / Kazusa), this protein is Response regulator Rre1.